Here is a 125-residue protein sequence, read N- to C-terminus: Small ribosomal subunit protein uS13 (125 aa).

Residues 92–125 (RRSLPVRGQRTQTNARTRKGKRKTVAGKKKATKK) form a disordered region. Residues 107–125 (RTRKGKRKTVAGKKKATKK) show a composition bias toward basic residues.

It belongs to the universal ribosomal protein uS13 family. As to quaternary structure, part of the 30S ribosomal subunit. Forms a loose heterodimer with protein S19. Forms two bridges to the 50S subunit in the 70S ribosome.

In terms of biological role, located at the top of the head of the 30S subunit, it contacts several helices of the 16S rRNA. In the 70S ribosome it contacts the 23S rRNA (bridge B1a) and protein L5 of the 50S subunit (bridge B1b), connecting the 2 subunits; these bridges are implicated in subunit movement. Contacts the tRNAs in the A and P-sites. The protein is Small ribosomal subunit protein uS13 of Chlorobium limicola (strain DSM 245 / NBRC 103803 / 6330).